The following is a 211-amino-acid chain: Putative ATP-dependent Clp protease proteolytic subunit-like (211 aa).

The interval Met-1–Ser-24 is disordered. His-129 is a catalytic residue.

This sequence belongs to the peptidase S14 family.

Its function is as follows. Has lost one of the conserved residue (Ser) proposed to be part of the active site. Therefore it could be inactive. The protein is Putative ATP-dependent Clp protease proteolytic subunit-like of Streptomyces coelicolor (strain ATCC BAA-471 / A3(2) / M145).